The primary structure comprises 200 residues: Large ribosomal subunit protein uL4 (200 aa).

Residues 38 to 65 are disordered; it reads GRQGSKAQKTRSEVSGGGKKPWRQKGTG.

Belongs to the universal ribosomal protein uL4 family. In terms of assembly, part of the 50S ribosomal subunit.

Functionally, one of the primary rRNA binding proteins, this protein initially binds near the 5'-end of the 23S rRNA. It is important during the early stages of 50S assembly. It makes multiple contacts with different domains of the 23S rRNA in the assembled 50S subunit and ribosome. In terms of biological role, forms part of the polypeptide exit tunnel. The chain is Large ribosomal subunit protein uL4 from Pseudomonas aeruginosa (strain LESB58).